Here is a 312-residue protein sequence, read N- to C-terminus: Acetyl-coenzyme A carboxylase carboxyl transferase subunit alpha (312 aa).

Residues 36–286 (NLEKEISKTY…ADYVKKSLNE (251 aa)) form the CoA carboxyltransferase C-terminal domain.

Belongs to the AccA family. Acetyl-CoA carboxylase is a heterohexamer composed of biotin carboxyl carrier protein (AccB), biotin carboxylase (AccC) and two subunits each of ACCase subunit alpha (AccA) and ACCase subunit beta (AccD).

The protein resides in the cytoplasm. It catalyses the reaction N(6)-carboxybiotinyl-L-lysyl-[protein] + acetyl-CoA = N(6)-biotinyl-L-lysyl-[protein] + malonyl-CoA. The protein operates within lipid metabolism; malonyl-CoA biosynthesis; malonyl-CoA from acetyl-CoA: step 1/1. In terms of biological role, component of the acetyl coenzyme A carboxylase (ACC) complex. First, biotin carboxylase catalyzes the carboxylation of biotin on its carrier protein (BCCP) and then the CO(2) group is transferred by the carboxyltransferase to acetyl-CoA to form malonyl-CoA. The protein is Acetyl-coenzyme A carboxylase carboxyl transferase subunit alpha of Campylobacter jejuni subsp. jejuni serotype O:6 (strain 81116 / NCTC 11828).